We begin with the raw amino-acid sequence, 318 residues long: MEHCTFNLPDVQASKPSIAINLTRVGVTNMKKLVEIKRKDKRPIVLISTFDVFVDLPSDRKGANLSRNFEAVDEVLEKVLSTPVYEIEQLCSDIAHNLLGRHEYANQAEVRMKSEYMIRRASPSTGIKCQEVVNIFAEASAVRGVGDKDYFDVKKLIGAEVVGMTACPCAQEIMRDKAANELAELGVDRDTIIRFLEKVPMATHNQRGRGIISIKVAHDFDVSLESIIRIIERSMSSSVYEVLKRSDEKVVVETAHMNPKFVEDCVRAMADNIVKEFPNLPDNAVITIKQINEESIHRHNAFAERVALMGELRSEINQ.

This sequence belongs to the GTP cyclohydrolase IV family. In terms of assembly, homodimer. Fe(2+) is required as a cofactor.

It carries out the reaction GTP + H2O = 7,8-dihydroneopterin 2',3'-cyclic phosphate + formate + diphosphate + H(+). It functions in the pathway cofactor biosynthesis; 5,6,7,8-tetrahydromethanopterin biosynthesis. Functionally, converts GTP to 7,8-dihydro-D-neopterin 2',3'-cyclic phosphate, the first intermediate in the biosynthesis of coenzyme methanopterin. In Methanosarcina acetivorans (strain ATCC 35395 / DSM 2834 / JCM 12185 / C2A), this protein is GTP cyclohydrolase MptA.